The primary structure comprises 122 residues: Large ribosomal subunit protein uL14 (122 aa).

This sequence belongs to the universal ribosomal protein uL14 family. Part of the 50S ribosomal subunit. Forms a cluster with proteins L3 and L19. In the 70S ribosome, L14 and L19 interact and together make contacts with the 16S rRNA in bridges B5 and B8.

Binds to 23S rRNA. Forms part of two intersubunit bridges in the 70S ribosome. The polypeptide is Large ribosomal subunit protein uL14 (Pseudomonas entomophila (strain L48)).